A 332-amino-acid chain; its full sequence is Ferrochelatase (332 aa).

2 residues coordinate Fe cation: His201 and Glu283.

It belongs to the ferrochelatase family.

It is found in the cytoplasm. The catalysed reaction is heme b + 2 H(+) = protoporphyrin IX + Fe(2+). The protein operates within porphyrin-containing compound metabolism; protoheme biosynthesis; protoheme from protoporphyrin-IX: step 1/1. In terms of biological role, catalyzes the ferrous insertion into protoporphyrin IX. This is Ferrochelatase from Francisella tularensis subsp. holarctica (strain FTNF002-00 / FTA).